Reading from the N-terminus, the 110-residue chain is Large ribosomal subunit protein uL22 (110 aa).

This sequence belongs to the universal ribosomal protein uL22 family. As to quaternary structure, part of the 50S ribosomal subunit.

In terms of biological role, this protein binds specifically to 23S rRNA; its binding is stimulated by other ribosomal proteins, e.g. L4, L17, and L20. It is important during the early stages of 50S assembly. It makes multiple contacts with different domains of the 23S rRNA in the assembled 50S subunit and ribosome. Functionally, the globular domain of the protein is located near the polypeptide exit tunnel on the outside of the subunit, while an extended beta-hairpin is found that lines the wall of the exit tunnel in the center of the 70S ribosome. This chain is Large ribosomal subunit protein uL22, found in Cellvibrio japonicus (strain Ueda107) (Pseudomonas fluorescens subsp. cellulosa).